Here is a 140-residue protein sequence, read N- to C-terminus: MKMFKSLSLLPRIVSPFQKCYSTDLISLVGIPRVKITKGQNRYLLVNIHTHGFTKYGRVIVRGADVDNHLTVFDSILEELEPQGICAKILGGGRILNEADSKKIKIYGTSRTFGSADHTRTRNILHSWTTYKDFKITVKN.

Substrate is bound at residue Arg42. Residue His69 is the Proton acceptor of the active site. Residue 110–112 coordinates substrate; that stretch reads SRT.

This sequence belongs to the janus family.

In terms of biological role, janA and janB regulate somatic sex differentiation. The chain is Sex-regulated protein janus-B (janB) from Drosophila teissieri (Fruit fly).